The primary structure comprises 647 residues: S-adenosyl-L-methionine-dependent tRNA 4-demethylwyosine synthase (647 aa).

Positions glycine 50–isoleucine 198 constitute a Flavodoxin-like domain. Residues serine 56 to threonine 60 and valine 142 to isoleucine 174 contribute to the FMN site. A Radical SAM core domain is found at tyrosine 316–glutamate 559. Residues cysteine 332, cysteine 336, and cysteine 339 each coordinate [4Fe-4S] cluster.

This sequence belongs to the TYW1 family. It depends on [4Fe-4S] cluster as a cofactor.

The catalysed reaction is N(1)-methylguanosine(37) in tRNA(Phe) + pyruvate + S-adenosyl-L-methionine = 4-demethylwyosine(37) in tRNA(Phe) + 5'-deoxyadenosine + L-methionine + CO2 + H2O. It participates in tRNA modification; wybutosine-tRNA(Phe) biosynthesis. Functionally, probable component of the wybutosine biosynthesis pathway. Wybutosine is a hyper modified guanosine with a tricyclic base found at the 3'-position adjacent to the anticodon of eukaryotic phenylalanine tRNA. Catalyzes the condensation of N-methylguanine with 2 carbon atoms from pyruvate to form the tricyclic 4-demethylwyosine, an intermediate in wybutosine biosynthesis. The polypeptide is S-adenosyl-L-methionine-dependent tRNA 4-demethylwyosine synthase (TYW1) (Arabidopsis thaliana (Mouse-ear cress)).